The following is a 211-amino-acid chain: LexA repressor (211 aa).

The segment at residues 31 to 51 is a DNA-binding region (H-T-H motif); the sequence is RAEISKELGFRSPNAAEEHLK. Catalysis depends on for autocatalytic cleavage activity residues Ser127 and Lys164.

The protein belongs to the peptidase S24 family. As to quaternary structure, homodimer.

The enzyme catalyses Hydrolysis of Ala-|-Gly bond in repressor LexA.. In terms of biological role, represses a number of genes involved in the response to DNA damage (SOS response), including recA and lexA. In the presence of single-stranded DNA, RecA interacts with LexA causing an autocatalytic cleavage which disrupts the DNA-binding part of LexA, leading to derepression of the SOS regulon and eventually DNA repair. The protein is LexA repressor of Pasteurella multocida (strain Pm70).